Here is a 320-residue protein sequence, read N- to C-terminus: ATP-dependent 6-phosphofructokinase (320 aa).

Glycine 12 is an ATP binding site. Residues 22-26 and 55-60 each bind ADP; these read RGVVR and RYSVSD. ATP is bound by residues 73–74 and 103–106; these read RF and GDGS. Aspartate 104 contacts Mg(2+). 126-128 contacts substrate; sequence TID. Aspartate 128 functions as the Proton acceptor in the catalytic mechanism. Arginine 155 lines the ADP pocket. Substrate is bound by residues arginine 163 and 170–172; that span reads MGR. ADP contacts are provided by residues 186–188, lysine 212, and 214–216; these read GCE and KKH. Residues glutamate 223, arginine 244, and 250 to 253 contribute to the substrate site; that span reads HIQR.

It belongs to the phosphofructokinase type A (PFKA) family. ATP-dependent PFK group I subfamily. Prokaryotic clade 'B1' sub-subfamily. In terms of assembly, homotetramer. Mg(2+) serves as cofactor.

It is found in the cytoplasm. The enzyme catalyses beta-D-fructose 6-phosphate + ATP = beta-D-fructose 1,6-bisphosphate + ADP + H(+). It functions in the pathway carbohydrate degradation; glycolysis; D-glyceraldehyde 3-phosphate and glycerone phosphate from D-glucose: step 3/4. With respect to regulation, allosterically activated by ADP and other diphosphonucleosides, and allosterically inhibited by phosphoenolpyruvate. In terms of biological role, catalyzes the phosphorylation of D-fructose 6-phosphate to fructose 1,6-bisphosphate by ATP, the first committing step of glycolysis. This chain is ATP-dependent 6-phosphofructokinase, found in Buchnera aphidicola subsp. Schizaphis graminum (strain Sg).